The primary structure comprises 690 residues: Methionine--tRNA ligase (690 aa).

Positions 20–30 (PYANGSIHLGH) match the 'HIGH' region motif. Cysteine 151, cysteine 154, cysteine 164, and cysteine 167 together coordinate Zn(2+). The 'KMSKS' region motif lies at 337-341 (KMSKS). Position 340 (lysine 340) interacts with ATP. A tRNA-binding domain is found at 589–690 (DFAKVDLRIA…EGAQPGMRVM (102 aa)).

It belongs to the class-I aminoacyl-tRNA synthetase family. MetG type 1 subfamily. Homodimer. Zn(2+) serves as cofactor.

It localises to the cytoplasm. The enzyme catalyses tRNA(Met) + L-methionine + ATP = L-methionyl-tRNA(Met) + AMP + diphosphate. Functionally, is required not only for elongation of protein synthesis but also for the initiation of all mRNA translation through initiator tRNA(fMet) aminoacylation. The chain is Methionine--tRNA ligase from Vibrio vulnificus (strain YJ016).